Here is a 732-residue protein sequence, read N- to C-terminus: Exonuclease 1 (732 aa).

The N-domain stretch occupies residues 1 to 99 (MGITGLIPFV…KRRRDSRKQS (99 aa)). Residues Asp-30, Asp-78, Glu-150, Asp-152, Asp-171, Asp-173, and Asp-226 each contribute to the Mg(2+) site. Residues 138 to 230 (RSRNVDCIVA…ILSGCDYLDS (93 aa)) form an I-domain region. Disordered stretches follow at residues 422-471 (YSFK…QRSP), 524-625 (DEQT…TNST), and 661-716 (SCSS…VSQN). 2 positions are modified to phosphoserine: Ser-431 and Ser-433. The segment covering 432–442 (PSREDSVDQER) has biased composition (basic and acidic residues). Thr-443 carries the post-translational modification Phosphothreonine. Residue Ser-447 is modified to Phosphoserine. 2 stretches are compositionally biased toward basic and acidic residues: residues 457 to 467 (FAKERTGEEAN) and 525 to 537 (EQTR…LRDT). Composition is skewed to polar residues over residues 572–593 (RCSS…SLLE) and 608–625 (DLNN…TNST). Over residues 661 to 677 (SCSSDQRASSTSSSSQQ) the composition is skewed to low complexity. Over residues 703-716 (KSRTNGKLGAVSQN) the composition is skewed to polar residues.

Belongs to the XPG/RAD2 endonuclease family. EXO1 subfamily. Mg(2+) is required as a cofactor. Specifically expressed in the female germline.

The protein localises to the nucleus. Its function is as follows. 5'-&gt;3' double-stranded DNA exonuclease which may also contain a cryptic 3'-&gt;5' double-stranded DNA exonuclease activity. Also exhibits endonuclease activity against 5'-overhanging flap structures similar to those generated by displacement synthesis when DNA polymerase encounters the 5'-end of a downstream Okazaki fragment. Required for DNA mismatch repair (MMR). This is Exonuclease 1 (tos) from Drosophila melanogaster (Fruit fly).